The chain runs to 163 residues: Transcriptional repressor NrdR (163 aa).

The segment at 3–34 is a zinc-finger region; the sequence is CVQCGHLEDKVIDSRMSKDGTTIRRRRVCLRC. Residues 49 to 139 enclose the ATP-cone domain; it reads LRVVKRDNLR…VYRQFSNVEE (91 aa).

This sequence belongs to the NrdR family. Zn(2+) serves as cofactor.

Functionally, negatively regulates transcription of bacterial ribonucleotide reductase nrd genes and operons by binding to NrdR-boxes. This chain is Transcriptional repressor NrdR, found in Akkermansia muciniphila (strain ATCC BAA-835 / DSM 22959 / JCM 33894 / BCRC 81048 / CCUG 64013 / CIP 107961 / Muc).